A 779-amino-acid polypeptide reads, in one-letter code: Pre-mRNA-splicing factor cef-1 (779 aa).

HTH myb-type domains follow at residues 1–56 (MPVV…DPSI) and 57–106 (KKIE…DEAE). DNA-binding regions (H-T-H motif) lie at residues 29–52 (WARV…NEWL) and 80–102 (WRTI…QRLL). 4 disordered regions span residues 113–192 (LGLT…ESRR), 246–284 (EYQR…PSVQ), 424–448 (TPLR…LRTP), and 497–525 (WELE…DRRE). The segment covering 127–152 (SADDVRKLRPGEVDPDPETKPARPDT) has biased composition (basic and acidic residues). Residues 157–204 (EDEKEMLSEARARLANTQGKKAKRKARERQQEESRRLAALQKRRELKT) are a coiled coil. 2 stretches are compositionally biased toward basic and acidic residues: residues 246–256 (EYQRAHFDPKK) and 263–281 (RKGE…DKDP). Positions 653 to 772 (DEEEEQISTM…EELDALTLNG (120 aa)) form a coiled coil.

The protein belongs to the CEF1 family. Associated with the spliceosome.

It localises to the cytoplasm. Its subcellular location is the nucleus. Its function is as follows. Involved in pre-mRNA splicing and cell cycle control. The sequence is that of Pre-mRNA-splicing factor cef-1 (cef-1) from Neurospora crassa (strain ATCC 24698 / 74-OR23-1A / CBS 708.71 / DSM 1257 / FGSC 987).